Consider the following 1218-residue polypeptide: NACHT, LRR and PYD domains-containing protein 1a allele 5 (1218 aa).

The segment covering 1–29 (MGESQSKQESNTRVAQHGSQQDVDPTFQT) has biased composition (polar residues). 2 disordered regions span residues 1–44 (MGES…QVEQ) and 71–91 (EMDH…DRSE). Over residues 77-87 (RRHSHQSKKKL) the composition is skewed to basic residues. Residues 175 to 484 (QLVIIEGAAG…EFFAAMSYIL (310 aa)) form the NACHT domain. Residue 181-188 (GAAGIGKS) coordinates ATP. 3 LRR repeats span residues 343–364 (KERN…LTLC), 673–693 (NLEE…RSLC), and 730–750 (RLAE…RQLC). A compositionally biased stretch (polar residues) spans 799–815 (TMPTENTDGEESLTSSK). Residues 799-842 (TMPTENTDGEESLTSSKQQQQQSGDKHMEPLGTDDDFWGPSGPV) form a disordered region. The tract at residues 835–968 (FWGPSGPVST…HFAVLENPSF (134 aa)) is ZU5. The region spanning 835–1118 (FWGPSGPVST…LRPALPRMAS (284 aa)) is the FIIND domain. Residues 969 to 1118 (SPMGVLLRMI…LRPALPRMAS (150 aa)) form a UPA region. One can recognise a CARD domain in the interval 1122 to 1211 (DAPALLHFVD…HLIMDLLEKS (90 aa)).

Belongs to the NLRP family. Interacts (via LRR repeats) with BCL2 and BCL2L1 (via the loop between motifs BH4 and BH3). Interacts with NOD2; this interaction is enhanced in the presence of muramyl dipeptide (MDP) and increases IL1B release. Interacts with EIF2AK2/PKR; this interaction requires EIF2AK2 activity, is accompanied by EIF2AK2 autophosphorylation and promotes inflammasome assembly in response to danger-associated signals. Interacts with MEFV; this interaction targets Nlrp1a to degradation by autophagy, hence preventing excessive IL1B- and IL18-mediated inflammation. Interacts with DPP9; leading to inhibit activation of the inflammasome. DPP9 acts via formation of a ternary complex, composed of a DPP9 homodimer, one full-length NLRP1 protein, and one cleaved C-terminus of Nlrp1a (NACHT, LRR and PYD domains-containing protein 1a, C-terminus). Interacts with DPP8; leading to inhibit activation of the inflammasome, probably via formation of a ternary complex with DPP8. As to quaternary structure, interacts with the C-terminal part of Nlrp1a (NACHT, LRR and PYD domains-containing protein 1a, C-terminus) in absence of pathogens and other damage-associated signals. In terms of assembly, interacts with the N-terminal part of Nlrp1a (NACHT, LRR and PYD domains-containing protein 1a, N-terminus) in absence of pathogens and other damage-associated signals. Homomultimer; forms the Nlrp1a inflammasome polymeric complex, a filament composed of homopolymers of this form in response to pathogens and other damage-associated signals. The Nlrp1a inflammasome polymeric complex directly recruits pro-caspase-1 (proCASP1) independently of PYCARD/ASC. Interacts (via CARD domain) with CASP1 (via CARD domain); leading to CASP1 activation. Autocatalytically cleaved. Autocatalytic cleavage in FIIND region occurs constitutively, prior to activation signals, and is required for inflammasome activity (IL1B release), possibly by facilitating CASP1 binding. Both N- and C-terminal parts remain associated non-covalently. Post-translationally, ubiquitinated in response to pathogen-associated signals, leading to its degradation by the proteasome and subsequent release of the cleaved C-terminal part of the protein (NACHT, LRR and PYD domains-containing protein 1a, C-terminus), which polymerizes and forms the Nlrp1a inflammasome.

The protein localises to the cytoplasm. The protein resides in the cytosol. It is found in the nucleus. It localises to the inflammasome. Activated by pathogens and other damage-associated signals: activation promotes ubiquitination and degradation of the N-terminal part, releasing the cleaved C-terminal part of the protein (NACHT, LRR and PYD domains-containing protein 1a, C-terminus), which polymerizes and forms the Nlrp1a inflammasome. Nlrp1a inflammasome is inhibited by DPP8 and DPP9, which sequester the C-terminal fragment of Nlrp1a (NACHT, LRR and PYD domains-containing protein 1a, C-terminus) in a ternary complex, thereby preventing Nlrp1a oligomerization and activation. Nlrp1a inflammasome is strongly activated by Val-boroPro (Talabostat, PT-100), an inhibitor of dipeptidyl peptidases DPP8 and DPP9. Val-boroPro relieves inhibition of DPP8 and/or DPP9 by promoting disruption of the ternary complex, releasing its C-terminal part from autoinhibition. Not activated by cleavage by B.anthracis lethal toxin (LT) endopeptidase. Highly activated by Toxoplasma gondii. Functionally, acts as the sensor component of the Nlrp1a inflammasome, which mediates inflammasome activation in response to various pathogen-associated signals, leading to subsequent pyroptosis. Inflammasomes are supramolecular complexes that assemble in the cytosol in response to pathogens and other damage-associated signals and play critical roles in innate immunity and inflammation. Acts as a recognition receptor (PRR): recognizes specific pathogens and other damage-associated signals, such as Val-boroPro inhibitor, and mediates the formation of the inflammasome polymeric complex. In response to pathogen-associated signals, the N-terminal part of Nlrp1a is degraded by the proteasome, releasing the cleaved C-terminal part of the protein (NACHT, LRR and PYD domains-containing protein 1a, C-terminus), which polymerizes to initiate the formation of the inflammasome complex: the inflammasome directly recruits pro-caspase-1 (proCASP1) independently of PYCARD/ASC and promotes caspase-1 (CASP1) activation, which subsequently cleaves and activates inflammatory cytokines IL1B and IL18 and gasdermin-D (GSDMD), leading to pyroptosis. In the absence of GSDMD expression, the Nlrp1a inflammasome is able to recruit and activate CASP8, leading to activation of gasdermin-E (GSDME). In terms of biological role, constitutes the precursor of the Nlrp1a inflammasome, which mediates autoproteolytic processing within the FIIND domain to generate the N-terminal and C-terminal parts, which are associated non-covalently in absence of pathogens and other damage-associated signals. Its function is as follows. Regulatory part that prevents formation of the Nlrp1a inflammasome: in absence of pathogens and other damage-associated signals, interacts with the C-terminal part of Nlrp1a (NACHT, LRR and PYD domains-containing protein 1a, C-terminus), preventing activation of the Nlrp1a inflammasome. In response to pathogen-associated signals, this part is ubiquitinated by the N-end rule pathway and degraded by the proteasome, releasing the cleaved C-terminal part of the protein, which polymerizes and forms the Nlrp1a inflammasome. Constitutes the active part of the Nlrp1a inflammasome. In absence of pathogens and other damage-associated signals, interacts with the N-terminal part of Nlrp1a (NACHT, LRR and PYD domains-containing protein 1a, N-terminus), preventing activation of the Nlrp1a inflammasome. In response to pathogen-associated signals, the N-terminal part of Nlrp1a is degraded by the proteasome, releasing this form, which polymerizes to form the Nlrp1a inflammasome complex: the Nlrp1a inflammasome complex then directly recruits pro-caspase-1 (proCASP1) and promotes caspase-1 (CASP1) activation, leading to gasdermin-D (GSDMD) cleavage and subsequent pyroptosis. This Rattus norvegicus (Rat) protein is NACHT, LRR and PYD domains-containing protein 1a allele 5.